A 347-amino-acid chain; its full sequence is Quinolinate synthase (347 aa).

Iminosuccinate-binding residues include His-47 and Ser-68. A [4Fe-4S] cluster-binding site is contributed by Cys-113. Iminosuccinate contacts are provided by residues 139 to 141 (YAN) and Ser-156. Cys-200 provides a ligand contact to [4Fe-4S] cluster. Residues 226-228 (HPE) and Thr-243 each bind iminosuccinate. Cys-297 is a binding site for [4Fe-4S] cluster.

It belongs to the quinolinate synthase family. Type 1 subfamily. The cofactor is [4Fe-4S] cluster.

It localises to the cytoplasm. The enzyme catalyses iminosuccinate + dihydroxyacetone phosphate = quinolinate + phosphate + 2 H2O + H(+). Its pathway is cofactor biosynthesis; NAD(+) biosynthesis; quinolinate from iminoaspartate: step 1/1. Its function is as follows. Catalyzes the condensation of iminoaspartate with dihydroxyacetone phosphate to form quinolinate. The protein is Quinolinate synthase of Escherichia coli O7:K1 (strain IAI39 / ExPEC).